Reading from the N-terminus, the 128-residue chain is MARVKRAVNAHKKRREVLEKASGYRGQRSRLYRKAKEQMLHSYTYSYNDRRKKKGDFRRLWIQRINAASRANGLTYNRFIQGLKAAEVEVDRRMLAELAVSDENAFAALVQVAKDALPEDTSAPRTAA.

The protein belongs to the bacterial ribosomal protein bL20 family.

Its function is as follows. Binds directly to 23S ribosomal RNA and is necessary for the in vitro assembly process of the 50S ribosomal subunit. It is not involved in the protein synthesizing functions of that subunit. The chain is Large ribosomal subunit protein bL20 from Kocuria rhizophila (strain ATCC 9341 / DSM 348 / NBRC 103217 / DC2201).